Here is a 353-residue protein sequence, read N- to C-terminus: Guanidino acid hydrolase, mitochondrial (353 aa).

The transit peptide at Met-1–Gln-33 directs the protein to the mitochondrion. Positions Pro-29 to Val-52 are disordered. Mn(2+) contacts are provided by His-163 and His-188. Residue Lys-194 is modified to N6-acetyllysine. Lys-218 carries the N6-acetyllysine; alternate modification. The residue at position 218 (Lys-218) is an N6-succinyllysine; alternate. Asp-279 provides a ligand contact to Mn(2+).

The protein belongs to the arginase family. Agmatinase subfamily. It depends on Mn(2+) as a cofactor.

The protein localises to the mitochondrion. It carries out the reaction 3-guanidinopropanoate + H2O = urea + beta-alanine. The enzyme catalyses 4-guanidinobutanoate + H2O = urea + 4-aminobutanoate. The catalysed reaction is taurocyamine + H2O = urea + taurine. It catalyses the reaction L-arginine + H2O = urea + L-ornithine. The protein operates within nitrogen metabolism; urea cycle; L-ornithine and urea from L-arginine: step 1/1. Hydrolyzes linear guanidino acids to form urea and the corresponding amines. Displays specificity for substrates having a negatively charged head group and short chains including taurocyamine, guanidino propanoic and butanoic acids. May protect cells by detoxifying potentially harmful amounts of guanidino acids. Metabolizes L-arginine with low efficiency. The polypeptide is Guanidino acid hydrolase, mitochondrial (Agmat) (Rattus norvegicus (Rat)).